Consider the following 677-residue polypeptide: Methionine--tRNA ligase (677 aa).

Positions 15-25 (PYANGSIHLGH) match the 'HIGH' region motif. Residues Cys146, Cys149, Cys159, and Cys162 each coordinate Zn(2+). The 'KMSKS' region signature appears at 333-337 (KMSKS). Lys336 contributes to the ATP binding site. The 103-residue stretch at 575–677 (DFAKVDLRVA…AGAKPGHQVK (103 aa)) folds into the tRNA-binding domain.

It belongs to the class-I aminoacyl-tRNA synthetase family. MetG type 1 subfamily. Homodimer. The cofactor is Zn(2+).

Its subcellular location is the cytoplasm. The catalysed reaction is tRNA(Met) + L-methionine + ATP = L-methionyl-tRNA(Met) + AMP + diphosphate. Its function is as follows. Is required not only for elongation of protein synthesis but also for the initiation of all mRNA translation through initiator tRNA(fMet) aminoacylation. The chain is Methionine--tRNA ligase from Escherichia coli O157:H7.